The chain runs to 2171 residues: MEDTQAIDWDVEEEEETEQSSESLRCNVEPVGRLHIFSGAHGPEKDFPLHLGKNVVGRMPDCSVALPFPSISKQHAEIEILAWDKAPILRDCGSLNGTQILRPPKVLSPGVSHRLRDQELILFADLLCQYHRLDVSLPFVSRGPLTVEETPRVQGGTQPQRLLLAEDSEEEVDFLSERRMVKKSRTTSSSVIVPESDEEGHSPVLGGLGPPFAFNLNSDTDVEEGQQPATEEASSAARRGATVEAKQSEAEVVTEIQLEKDQPLVKERDDDTKVKRGAENGVVPAGVILERSQPPGEDSDTDVDDDSRPPGRPAEVHLERAQPFGFINSDTDAEEERIPATPVVIPMKKRKIFHGVGTRGPGAPGLAHLQESQAGSDTDVEEGKAPQAVPLEKSQASMVINSDTDDEEEVSAALTLAHLKESQPAIWNRDAEEDMPQRVVLLQRSQTTTERDSDTDVEEEELPVENREAVLKDHTKIRALVRAHSEKDQPPFGDSDDSVEADKSSPGIHLERSQASTTVDINTQVEKEVPPGSAIIHIKKHQVSVEGTNQTDVKAVGGPAKLLVVSLEEAWPLHGDCETDAEEDTSLAASAVADVRKSQLPAEGDAGAEWAAAVLKQERAHEVGAQGGPPVAQVEQDLPISRENLTDLVVDTDTLGESTQPQREGAQVPTGREREQHVGGTKDSEDNYGDSEDLDLQATQCFLENQGLEAVQSMEDEPTQAFMLTPPQELGPSHCSFQTTGTLDEPWEVLATQPFCLRESEDSETQPFDTHLEAYGPCLSPPRAIPGDQHPESPVHTEPMGIQGRGRQTVDKVMGIPKETAERVGPERGPLERETEKLLPERQTDVTGEEELTKGKQDREQKQLLARDTQRQESDKNGESASPERDRESLKVEIETSEEIQEKQVQKQTLPSKAFEREVERPVANRECDPAELEEKVPKVILERDTQRGEPEGGSQDQKGQASSPIPEPGVEAGDLPGPTSAPVTSGSQSGGRGSPVSPRRHQKGLLNCKMPPAEKASRIRAAEKVSRGDQESPDACLPPTVPEAPAPPQKPLNSQSQKHLAPPPLLSPLLPSIKPTVRKTRQDGSQEAPEAPLSSELEPFHPKPKIRTRKSSRMTTFPATSAAPEPHPSTSTAQPVTPKPTSQATRSRTNRSSVKTPEQGVPTAPELQPCTSTDQPVTSEPTSQVTRGRKSRSSVKTPETVVPTALELQPSTSTDRPVTSEPTSHATRGRKNRSSVKTPEPVVPTAPELQPSTSTDQPVTSEPTYQATRGRKNRSSVKTPEPVVPTAPELQPSTSTDQPVTPKPTSRTTRSRTNMSSVKNPESTVPIAPELPPSTSTEQPVTPEPTSRATRGRKNRSSGKTPETLVPTAPKLEPSTSTDQPVTPEPTSQATRGRTNRSSVKTPETVVPTAPELQLSTSTDQAVTPKPTSRTTRSRTNMSSVKNPESTVPIAPELPPSTSTEQPVTPEPTSRATRGRKNRSSGKTPETLVPTAPKLEPSTSTDQPVTPEPTSQATRGRTNRSSVKTPETVVPTAPELQPSTSTDQPVTPEPTSQVTRGRTDRSSVKTPETVVPTAPELQASASTDQPVTSEPTSRTTRGRKNRSSVKTPETVVPTAPELQPSTSTDQPVTPEPTSQATRGRTNRSSVKTPESIVPIAPELQPSTSRNQLVTPEPTSRATRCRTNRSSVKTPEPVVPTAPEPHPTTSTDQPVTPKLTSRATRRKTNRSSVKTPKPVEPAASDLEPFTPTDQSVTPEAIAQGGQSKTLRSSTVRAMPVPTTPEFQSPVTTDQPISPEPITQPSCIKRQRAAGNPGSLAAPIDHKPCSAPLEPKSQASRNQRWGAVRAAESLTAIPEPASPQLLETPIHASQIQKVEPAGRSRFTPELQPKASQSRKRSLATMDSPPHQKQPQRGEVSQKTVIIKEEEEDTAEKPGKEEDVVTPKPGKRKRDQAEEEPNRIPSRSLRRTKLNQESTAPKVLFTGVVDARGERAVLALGGSLAGSAAEASHLVTDRIRRTVKFLCALGRGIPILSLDWLHQSHKAGFFLPPDEYVVTDPEQEKNFGFSLQDALSRARERRLLEGYEIYVTPGVQPPPPQMGEIISCCGGTYLPSMPRSYKPQRVVITCPQDFPHCSIPLRVGLPLLSPEFLLTGVLKQEAKPEAFVLSPLEMSST.

Acidic residues predominate over residues 1–19 (MEDTQAIDWDVEEEEETEQ). The interval 1–22 (MEDTQAIDWDVEEEEETEQSSE) is disordered. Residues 1–150 (MEDTQAIDWD…SRGPLTVEET (150 aa)) form an interaction with CHEK2 region. An interaction with the MRN complex region spans residues 2–220 (EDTQAIDWDV…PFAFNLNSDT (219 aa)). T4 is modified (phosphothreonine). The FHA domain occupies 54 to 105 (NVVGRMPDCSVALPFPSISKQHAEIEILAWDKAPILRDCGSLNGTQILRPPK). A Phosphoserine modification is found at S108. The segment at 145 to 568 (LTVEETPRVQ…PAKLLVVSLE (424 aa)) is required for nuclear localization (NLS1). The residue at position 146 (T146) is a Phosphothreonine. Residues S168, S176, S196, and S218 each carry the phosphoserine modification. Disordered stretches follow at residues 185–248 (RTTS…AKQS) and 261–317 (DQPL…AEVH). T220 bears the Phosphothreonine mark. Residues 261–278 (DQPLVKERDDDTKVKRGA) show a composition bias toward basic and acidic residues. S299 carries the post-translational modification Phosphoserine. T301 is modified (phosphothreonine). Residues 306 to 317 (DSRPPGRPAEVH) show a composition bias toward basic and acidic residues. S329 is subject to Phosphoserine. Phosphothreonine is present on T331. The tract at residues 355–387 (GVGTRGPGAPGLAHLQESQAGSDTDVEEGKAPQ) is disordered. Phosphoserine occurs at positions 372 and 376. Phosphothreonine is present on T378. S394, S397, and S402 each carry phosphoserine. T404 is modified (phosphothreonine). S411 is modified (phosphoserine). Disordered stretches follow at residues 443–469 (QRSQTTTERDSDTDVEEEELPVENREA) and 481–522 (VRAH…VDIN). T449 is subject to Phosphothreonine. S453 is modified (phosphoserine). T455 is modified (phosphothreonine). Residues S485, S495, S498, S504, S505, and S513 each carry the phosphoserine modification. Positions 513-522 (SQASTTVDIN) are enriched in polar residues. T523 carries the post-translational modification Phosphothreonine. S590 bears the Phosphoserine mark. K616 participates in a covalent cross-link: Glycyl lysine isopeptide (Lys-Gly) (interchain with G-Cter in SUMO1); alternate. Residue K616 forms a Glycyl lysine isopeptide (Lys-Gly) (interchain with G-Cter in SUMO2); alternate linkage. Disordered regions lie at residues 653 to 689 (DTLGESTQPQREGAQVPTGREREQHVGGTKDSEDNYG) and 780 to 1969 (SPPR…TKLN). The span at 671-685 (GREREQHVGGTKDSE) shows a compositional bias: basic and acidic residues. Phosphoserine is present on residues S780 and S793. Residue K812 is modified to N6-acetyllysine. Basic and acidic residues-rich tracts occupy residues 819 to 844 (ETAERVGPERGPLERETEKLLPERQT), 851 to 862 (ELTKGKQDREQK), 868 to 905 (DTQRQESDKNGESASPERDRESLKVEIETSEEIQEKQV), and 914 to 951 (AFEREVERPVANRECDPAELEEKVPKVILERDTQRGEP). Residues S955 and S998 each carry the phosphoserine modification. Residues 955–964 (SQDQKGQASS) show a composition bias toward polar residues. Basic and acidic residues predominate over residues 1016–1031 (KASRIRAAEKVSRGDQ). S1033 bears the Phosphoserine mark. Residues 1040–1051 (PTVPEAPAPPQK) are compositionally biased toward pro residues. S1068 and S1086 each carry phosphoserine. Residues 1103-1113 (PKPKIRTRKSS) show a composition bias toward basic residues. Composition is skewed to polar residues over residues 1129–1157 (PSTSTAQPVTPKPTSQATRSRTNRSSVKT) and 1170–1187 (PCTSTDQPVTSEPTSQVT). An interaction with the PRKDC complex region spans residues 1148-1692 (SRTNRSSVKT…TNRSSVKTPE (545 aa)). Residue T1157 is modified to Phosphothreonine. The residue at position 1198 (T1198) is a Phosphothreonine. Positions 1210–1227 (QPSTSTDRPVTSEPTSHA) are enriched in polar residues. S1235 carries the post-translational modification Phosphoserine. T1239 carries the phosphothreonine modification. Residues 1251-1268 (QPSTSTDQPVTSEPTYQA) are compositionally biased toward polar residues. Residues T1280 and T1302 each carry the phosphothreonine modification. Over residues 1306 to 1318 (TSRTTRSRTNMSS) the composition is skewed to low complexity. Composition is skewed to polar residues over residues 1334 to 1350 (PSTSTEQPVTPEPTSRA) and 1375 to 1403 (PSTSTDQPVTPEPTSQATRGRTNRSSVKT). The segment covering 1429–1441 (TSRTTRSRTNMSS) has biased composition (low complexity). Residues 1457 to 1473 (PSTSTEQPVTPEPTSRA) are compositionally biased toward polar residues. Phosphoserine occurs at positions 1481 and 1482. Position 1484 is an N6-acetyllysine (K1484). Position 1485 is a phosphothreonine (T1485). K1495 is covalently cross-linked (Glycyl lysine isopeptide (Lys-Gly) (interchain with G-Cter in SUMO1); alternate). Residue K1495 forms a Glycyl lysine isopeptide (Lys-Gly) (interchain with G-Cter in SUMO2); alternate linkage. Composition is skewed to polar residues over residues 1498–1526 (PSTSTDQPVTPEPTSQATRGRTNRSSVKT), 1538–1557 (QPSTSTDQPVTPEPTSQVTR), and 1580–1596 (ASASTDQPVTSEPTSRT). Residues T1507 and T1548 each carry the phosphothreonine modification. 2 positions are modified to phosphothreonine: T1615 and T1630. Polar residues-rich tracts occupy residues 1620–1649 (QPSTSTDQPVTPEPTSQATRGRTNRSSVKT) and 1661–1678 (QPSTSRNQLVTPEPTSRA). S1646 is modified (phosphoserine). Phosphothreonine is present on residues T1649 and T1671. S1686 is subject to Phosphoserine. T1690 is modified (phosphothreonine). Residues 1693-1702 (PVVPTAPEPH) show a composition bias toward pro residues. Residues 1706–1718 (STDQPVTPKLTSR) are compositionally biased toward polar residues. Phosphothreonine is present on residues T1712, T1746, and T1753. Positions 1760–1771 (GGQSKTLRSSTV) are enriched in polar residues. At S1763 the chain carries Phosphoserine. Position 1779 is a phosphothreonine (T1779). Residues 1780–1801 (PEFQSPVTTDQPISPEPITQPS) are compositionally biased toward polar residues. The interval 1780–2171 (PEFQSPVTTD…VLSPLEMSST (392 aa)) is required for nuclear localization (NLS2). 2 positions are modified to phosphoserine: S1784 and S1793. A Glycyl lysine isopeptide (Lys-Gly) (interchain with G-Cter in SUMO2) cross-link involves residue K1822. At S1857 the chain carries Phosphoserine. K1872 participates in a covalent cross-link: Glycyl lysine isopeptide (Lys-Gly) (interchain with G-Cter in SUMO2). Position 1882 is a phosphothreonine (T1882). The residue at position 1902 (S1902) is a Phosphoserine. Over residues 1905–1918 (HQKQPQRGEVSQKT) the composition is skewed to polar residues. Residue K1922 forms a Glycyl lysine isopeptide (Lys-Gly) (interchain with G-Cter in SUMO1); alternate linkage. K1922 participates in a covalent cross-link: Glycyl lysine isopeptide (Lys-Gly) (interchain with G-Cter in SUMO2); alternate. Positions 1929–1939 (AEKPGKEEDVV) are enriched in basic and acidic residues. T1940 carries the post-translational modification Phosphothreonine. BRCT domains follow at residues 1974 to 2052 (APKV…EYVV) and 2073 to 2164 (RERR…FVLS). At R2025 the chain carries Omega-N-methylarginine.

Homodimer. Interacts with H2AX, which requires phosphorylation of H2AX on 'Ser-139'. Interacts with the MRN complex, composed of MRE11, RAD50, and NBN. Interacts with CHEK2, which requires ATM-mediated phosphorylation of 'Thr-68' within the FHA domain of CHEK2. Interacts constitutively with the BRCA1-BARD1 complex, SMC1A and TP53BP1. Interacts with ATM and FANCD2, and these interactions are reduced upon DNA damage. Also interacts with the PRKDC complex, composed of XRCC6/KU70, XRCC5/KU80 and PRKDC/XRCC7. This interaction may be required for PRKDC autophosphorylation, which is essential for DNA double strand break (DSB) repair. When phosphorylated by ATM, interacts with RNF8 (via FHA domain). Interacts with CEP164. When phosphorylated, interacts with APTX (via FHA-like domain). Interacts (when phosphorylated) with TOPBP1; promoting TOPBP1 localization to DNA damage sites during mitosis. Interacts (when phosphorylated) with NBN; promoting NBN and MRN complex localization to DNA damage sites. Post-translationally, phosphorylated upon exposure to ionizing radiation (IR), ultraviolet radiation (UV), and hydroxyurea (HU). Phosphorylation in response to IR requires ATM, NBN, and possibly CHEK2. Also phosphorylated during the G2/M phase of the cell cycle and during activation of the mitotic spindle checkpoint. Phosphorylation at Thr-4 by ATM stabilizes and enhances homodimerization via the FHA domain. Phosphorylated at Ser-168 and Ser-196 by CK2 in response to DNA damage during mitosis, promoting interaction with TOPBP1. Phosphorylated by CK2 in response to DNA damage, promoting interaction with NBN and recruitment of the MRN complex to DNA damage sites. Sumoylation at Lys-1922 by PIAS4 following DNA damage promotes ubiquitin-mediated degradation. In terms of processing, ubiquitinated by RNF4, leading to proteasomal degradation; undergoes 'Lys-48'-linked polyubiquitination.

The protein localises to the nucleus. It is found in the chromosome. Functionally, histone reader protein required for checkpoint-mediated cell cycle arrest in response to DNA damage within both the S phase and G2/M phases of the cell cycle. Specifically recognizes and binds histone H2AX phosphorylated at 'Ser-139', a marker of DNA damage, serving as a scaffold for the recruitment of DNA repair and signal transduction proteins to discrete foci of DNA damage sites. Also required for downstream events subsequent to the recruitment of these proteins. These include phosphorylation and activation of the ATM, CHEK1 and CHEK2 kinases, and stabilization of TP53/p53 and apoptosis. ATM and CHEK2 may also be activated independently by a parallel pathway mediated by TP53BP1. Required for chromosomal stability during mitosis by promoting recruitment of TOPBP1 to DNA double strand breaks (DSBs): TOPBP1 forms filamentous assemblies that bridge MDC1 and tether broken chromosomes during mitosis. Required for the repair of DSBs via homologous recombination by promoting recruitment of NBN component of the MRN complex to DSBs. The sequence is that of Mediator of DNA damage checkpoint protein 1 (MDC1) from Pan troglodytes (Chimpanzee).